The chain runs to 360 residues: Peptide chain release factor 1 (360 aa).

Gln235 is subject to N5-methylglutamine. Basic and acidic residues predominate over residues 285–295 (RQAAEQADTRR). Residues 285–309 (RQAAEQADTRRNLLGSGDRSDKIRT) form a disordered region.

The protein belongs to the prokaryotic/mitochondrial release factor family. In terms of processing, methylated by PrmC. Methylation increases the termination efficiency of RF1.

The protein resides in the cytoplasm. Its function is as follows. Peptide chain release factor 1 directs the termination of translation in response to the peptide chain termination codons UAG and UAA. The protein is Peptide chain release factor 1 of Actinobacillus pleuropneumoniae serotype 7 (strain AP76).